We begin with the raw amino-acid sequence, 670 residues long: Beta-fructofuranosidase 1 (670 aa).

The disordered stretch occupies residues 1-40 (MIPAVADPTTLDGGGARRPLLPETDPRGRAAAGAEQKRPP). The Cytoplasmic segment spans residues 1–44 (MIPAVADPTTLDGGGARRPLLPETDPRGRAAAGAEQKRPPATPT). The propeptide at 1 to 112 (MIPAVADPTT…APLLGSGALQ (112 aa)) is removed in mature form. Residues 45-65 (VLTAVVSAVLLLVLVAVTVLA) traverse the membrane as a helical; Signal-anchor for type II membrane protein segment. Residues 66-670 (SQHVDGQAGG…RPYPATTTSL (605 aa)) lie on the Lumenal side of the membrane. Substrate is bound by residues 136–139 (WMND), Gln-155, and Trp-163. Asp-139 is an active-site residue. A glycan (N-linked (GlcNAc...) asparagine) is linked at Asn-165. Residues 198–199 (WS) and 263–264 (RD) each bind substrate. N-linked (GlcNAc...) asparagine glycosylation is present at Asn-275. Substrate-binding residues include Glu-322 and Asp-362. Residue Asn-518 is glycosylated (N-linked (GlcNAc...) asparagine). Cys-519 and Cys-567 form a disulfide bridge. N-linked (GlcNAc...) asparagine glycans are attached at residues Asn-595 and Asn-639.

Belongs to the glycosyl hydrolase 32 family. In terms of assembly, may be present in two forms, a 70 kDa monomer and a heterodimer of the 30 kDa and 38 kDa subunits. The ratio of the levels of the two forms within cells appears to be regulated developmentally.

The protein localises to the membrane. It localises to the vacuole lumen. It carries out the reaction Hydrolysis of terminal non-reducing beta-D-fructofuranoside residues in beta-D-fructofuranosides.. The protein operates within glycan biosynthesis; sucrose metabolism. This chain is Beta-fructofuranosidase 1 (IVR1), found in Zea mays (Maize).